A 127-amino-acid chain; its full sequence is Aspartate 1-decarboxylase (127 aa).

The active-site Schiff-base intermediate with substrate; via pyruvic acid is S25. Position 25 is a pyruvic acid (Ser) (S25). T57 contributes to the substrate binding site. The active-site Proton donor is the Y58. 73 to 75 (GAA) is a substrate binding site.

The protein belongs to the PanD family. In terms of assembly, heterooctamer of four alpha and four beta subunits. Pyruvate is required as a cofactor. Is synthesized initially as an inactive proenzyme, which is activated by self-cleavage at a specific serine bond to produce a beta-subunit with a hydroxyl group at its C-terminus and an alpha-subunit with a pyruvoyl group at its N-terminus.

It localises to the cytoplasm. The enzyme catalyses L-aspartate + H(+) = beta-alanine + CO2. It functions in the pathway cofactor biosynthesis; (R)-pantothenate biosynthesis; beta-alanine from L-aspartate: step 1/1. Its function is as follows. Catalyzes the pyruvoyl-dependent decarboxylation of aspartate to produce beta-alanine. The chain is Aspartate 1-decarboxylase from Desulfitobacterium hafniense (strain DSM 10664 / DCB-2).